The primary structure comprises 844 residues: Rho guanine nucleotide exchange factor 33 (844 aa).

Composition is skewed to basic and acidic residues over residues 1 to 13 (MEKTKTKQGENEH) and 101 to 113 (QQKIEQLQQEKRR). Disordered regions lie at residues 1–20 (MEKTKTKQGENEHMPVNNPS), 101–142 (QQKI…GSPF), and 169–189 (AQESRSVHVGDSNVKGMMGPG). Residues 54-129 (LEEKVKSCRC…AKKTQKEEHS (76 aa)) adopt a coiled-coil conformation. Over residues 130 to 142 (SQAGPAQAQGSPF) the composition is skewed to polar residues. The DH domain maps to 265–440 (KRQTVALELL…RVFISHYTLL (176 aa)). Disordered stretches follow at residues 498–541 (LQPY…DWEL), 668–687 (RPEHPLQPLPKSATSPAGSS), and 702–745 (AKPL…RAAQ). The residue at position 757 (Arg757) is an Omega-N-methylarginine. Basic and acidic residues predominate over residues 787–800 (DTTRFCPKEERESE). Residues 787–844 (DTTRFCPKEERESEQTSFSDQNPRQDQKGGFRSSFRKLFKKKNGNATGEDFCGPWGWW) are disordered. Residues 820–829 (SFRKLFKKKN) are compositionally biased toward basic residues.

Functionally, may act as a guanine-nucleotide releasing factor. The chain is Rho guanine nucleotide exchange factor 33 (ARHGEF33) from Homo sapiens (Human).